Here is a 445-residue protein sequence, read N- to C-terminus: Phosphoglucosamine mutase (445 aa).

The active-site Phosphoserine intermediate is S104. Positions 104, 243, 245, and 247 each coordinate Mg(2+). The residue at position 104 (S104) is a Phosphoserine.

It belongs to the phosphohexose mutase family. It depends on Mg(2+) as a cofactor. Activated by phosphorylation.

The catalysed reaction is alpha-D-glucosamine 1-phosphate = D-glucosamine 6-phosphate. Functionally, catalyzes the conversion of glucosamine-6-phosphate to glucosamine-1-phosphate. The polypeptide is Phosphoglucosamine mutase (Chromobacterium violaceum (strain ATCC 12472 / DSM 30191 / JCM 1249 / CCUG 213 / NBRC 12614 / NCIMB 9131 / NCTC 9757 / MK)).